We begin with the raw amino-acid sequence, 249 residues long: Triosephosphate isomerase (249 aa).

Positions 12 and 14 each coordinate substrate. An N6-acetyllysine modification is found at lysine 14. Position 68 is a 3'-nitrotyrosine (tyrosine 68). The residue at position 80 (serine 80) is a Phosphoserine. Histidine 96 functions as the Electrophile in the catalytic mechanism. At serine 106 the chain carries Phosphoserine. A Glycyl lysine isopeptide (Lys-Gly) (interchain with G-Cter in SUMO1) cross-link involves residue lysine 142. Lysine 149 carries the post-translational modification N6-succinyllysine. Lysine 156 bears the N6-acetyllysine; alternate mark. N6-succinyllysine; alternate is present on lysine 156. The active-site Proton acceptor is the glutamate 166. Threonine 173 carries the post-translational modification Phosphothreonine. The residue at position 194 (lysine 194) is an N6-acetyllysine; alternate. Lysine 194 carries the N6-succinyllysine; alternate modification. Lysine 194 is modified (N6-methyllysine; alternate). Residue serine 198 is modified to Phosphoserine. Residue tyrosine 209 is modified to 3'-nitrotyrosine. Residue serine 212 is modified to Phosphoserine. Position 214 is a phosphothreonine (threonine 214). Phosphoserine is present on serine 223. Lysine 238 carries the post-translational modification N6-acetyllysine.

It belongs to the triosephosphate isomerase family. In terms of assembly, homodimer.

The protein localises to the cytoplasm. It catalyses the reaction dihydroxyacetone phosphate = methylglyoxal + phosphate. It carries out the reaction D-glyceraldehyde 3-phosphate = dihydroxyacetone phosphate. Its pathway is carbohydrate degradation; glycolysis; D-glyceraldehyde 3-phosphate from glycerone phosphate: step 1/1. It participates in carbohydrate biosynthesis; gluconeogenesis. Functionally, triosephosphate isomerase is an extremely efficient metabolic enzyme that catalyzes the interconversion between dihydroxyacetone phosphate (DHAP) and D-glyceraldehyde-3-phosphate (G3P) in glycolysis and gluconeogenesis. It is also responsible for the non-negligible production of methylglyoxal a reactive cytotoxic side-product that modifies and can alter proteins, DNA and lipids. The protein is Triosephosphate isomerase (Tpi1) of Rattus norvegicus (Rat).